A 367-amino-acid chain; its full sequence is Heparan sulfate glucosamine 3-O-sulfotransferase 2 (367 aa).

At 1–19 (MAYRVLGRAGPPQPRRARR) the chain is on the cytoplasmic side. The helical; Signal-anchor for type II membrane protein transmembrane segment at 20–39 (LLFAFTLSLSCTYLCYSFLC) threads the bilayer. At 40-367 (CCDDLGRSRL…ETVGQDFRWE (328 aa)) the chain is on the lumenal side. Residues 61–110 (AGGQKLLQKSRPCDPSGPTPSEPSAPSAPAAAVPAPRLSGSNHSGSPKLG) are disordered. Residues 84 to 96 (SAPSAPAAAVPAP) are compositionally biased toward low complexity. A glycan (N-linked (GlcNAc...) asparagine) is linked at Asn102. 124 to 128 (KGGTR) is a binding site for 3'-phosphoadenylyl sulfate. Substrate-binding positions include 146-152 (EPHFFDR) and 177-180 (KTPS). N-linked (GlcNAc...) asparagine glycosylation occurs at Asn193. 2 residues coordinate 3'-phosphoadenylyl sulfate: Arg205 and Ser213. Residue Asn235 is glycosylated (N-linked (GlcNAc...) asparagine). 245–246 (WN) is a substrate binding site. Residue Asn306 is glycosylated (N-linked (GlcNAc...) asparagine). A disulfide bridge links Cys313 with Cys325. Position 330–334 (330–334 (KGRTH)) interacts with 3'-phosphoadenylyl sulfate.

This sequence belongs to the sulfotransferase 1 family. Highly expressed in the brain and weakly expressed in the heart, placenta, lung and skeletal muscle.

It localises to the golgi apparatus membrane. It carries out the reaction alpha-D-glucosaminyl-[heparan sulfate](n) + 3'-phosphoadenylyl sulfate = 3-sulfo-alpha-D-glucosaminyl-[heparan sulfate](n) + adenosine 3',5'-bisphosphate + H(+). Sulfotransferase that utilizes 3'-phospho-5'-adenylyl sulfate (PAPS) to catalyze the transfer of a sulfo group to an N-unsubstituted glucosamine linked to a 2-O-sulfo iduronic acid unit on heparan sulfate. Catalyzes the O-sulfation of glucosamine in GlcA2S-GlcNS. Unlike HS3ST1/3-OST-1, does not convert non-anticoagulant heparan sulfate to anticoagulant heparan sulfate. The polypeptide is Heparan sulfate glucosamine 3-O-sulfotransferase 2 (HS3ST2) (Homo sapiens (Human)).